The sequence spans 1188 residues: DNA-directed RNA polymerase subunit beta (1188 aa).

The protein belongs to the RNA polymerase beta chain family. The RNAP catalytic core consists of 2 alpha, 1 beta, 1 beta' and 1 omega subunit. When a sigma factor is associated with the core the holoenzyme is formed, which can initiate transcription.

The catalysed reaction is RNA(n) + a ribonucleoside 5'-triphosphate = RNA(n+1) + diphosphate. In terms of biological role, DNA-dependent RNA polymerase catalyzes the transcription of DNA into RNA using the four ribonucleoside triphosphates as substrates. The sequence is that of DNA-directed RNA polymerase subunit beta from Streptococcus gordonii (strain Challis / ATCC 35105 / BCRC 15272 / CH1 / DL1 / V288).